Consider the following 144-residue polypeptide: Large ribosomal subunit protein uL16 (144 aa).

The protein belongs to the universal ribosomal protein uL16 family. Part of the 50S ribosomal subunit.

Its function is as follows. Binds 23S rRNA and is also seen to make contacts with the A and possibly P site tRNAs. In Bacillus mycoides (strain KBAB4) (Bacillus weihenstephanensis), this protein is Large ribosomal subunit protein uL16.